Consider the following 476-residue polypeptide: Glycogen synthase (476 aa).

Position 15 (lysine 15) interacts with ADP-alpha-D-glucose.

This sequence belongs to the glycosyltransferase 1 family. Bacterial/plant glycogen synthase subfamily.

It carries out the reaction [(1-&gt;4)-alpha-D-glucosyl](n) + ADP-alpha-D-glucose = [(1-&gt;4)-alpha-D-glucosyl](n+1) + ADP + H(+). It participates in glycan biosynthesis; glycogen biosynthesis. In terms of biological role, synthesizes alpha-1,4-glucan chains using ADP-glucose. The chain is Glycogen synthase from Mycoplasma mobile (strain ATCC 43663 / 163K / NCTC 11711) (Mesomycoplasma mobile).